We begin with the raw amino-acid sequence, 301 residues long: MEKGFDKSAIQMVIITGLSGAGKSQAIRALEDLGFFCVDNLPPNLLPKFGELIVHSKGKINKIALVIDIRGGEFFDSLSDGLHQLGAQGIRCEILFLEASDEVLIRRYKESRRRHPLSGDARIFDSIQLERQMLADLRGRADKVIDTSDLSARQLKNQVFELFGKDARHSQLRITIVSFGYKYGTPRDADLLMDVRFLPNPFYEPALRNLTGNDEPVQEYVLSSPTTKVFMRKYYSLLRFLLPHYTKEGKSHLVVGIGCTGGKHRSVTLANRLAAALVDEDYAITVKHRDIDKDRGGGESA.

An ATP-binding site is contributed by 17–24 (GLSGAGKS). 68–71 (DIRG) is a GTP binding site.

Belongs to the RapZ-like family.

Its function is as follows. Displays ATPase and GTPase activities. The protein is Nucleotide-binding protein Helmi_06460 of Heliobacterium modesticaldum (strain ATCC 51547 / Ice1).